The chain runs to 128 residues: Large ribosomal subunit protein bL12 (128 aa).

Belongs to the bacterial ribosomal protein bL12 family. In terms of assembly, homodimer. Part of the ribosomal stalk of the 50S ribosomal subunit. Forms a multimeric L10(L12)X complex, where L10 forms an elongated spine to which 2 to 4 L12 dimers bind in a sequential fashion. Binds GTP-bound translation factors.

Its function is as follows. Forms part of the ribosomal stalk which helps the ribosome interact with GTP-bound translation factors. Is thus essential for accurate translation. The polypeptide is Large ribosomal subunit protein bL12 (Kineococcus radiotolerans (strain ATCC BAA-149 / DSM 14245 / SRS30216)).